The sequence spans 412 residues: MEKAILIRFGDLVLKGKNKPKFIGQIKKNIRSKLKNVNVEYTFQHDRIYVHFNEVDSDEVIKQLGYVSGIHSFSYIYKTTKDIESIAQLAKEVIQKEVKLPTTFKIETKRTDKNYPLKSLEISQKVASLVLPSFDGLKVEVRNPETVLDIELRSEGTYIYVGKIPALGGFPIGLGGKGLVMLSGGIDSPVAAHLMMKQGIDVELFHFESTPLTPLESVQKVIEIAKKLAYYTPYNKIKLHLVPFTKIHEAILSYVADPYIITIMRRMFYRLGEIYANQHGLDTLINGESVGQVASQTLSSIKVIENVTSIPILRPVITYDKNDIINISKKIDTYDISILPFNDCCSIYVPRNPVTKPTIDQALKEESRFEFKELLEDALKNVQTMIITPTTDFEIALHGFDVKDALSSYTQE.

Positions D58–K163 constitute a THUMP domain. ATP-binding positions include M181–L182, H206–F207, R265, G287, and Q296.

Belongs to the ThiI family.

The protein resides in the cytoplasm. It catalyses the reaction [ThiI sulfur-carrier protein]-S-sulfanyl-L-cysteine + a uridine in tRNA + 2 reduced [2Fe-2S]-[ferredoxin] + ATP + H(+) = [ThiI sulfur-carrier protein]-L-cysteine + a 4-thiouridine in tRNA + 2 oxidized [2Fe-2S]-[ferredoxin] + AMP + diphosphate. It carries out the reaction [ThiS sulfur-carrier protein]-C-terminal Gly-Gly-AMP + S-sulfanyl-L-cysteinyl-[cysteine desulfurase] + AH2 = [ThiS sulfur-carrier protein]-C-terminal-Gly-aminoethanethioate + L-cysteinyl-[cysteine desulfurase] + A + AMP + 2 H(+). Its pathway is cofactor biosynthesis; thiamine diphosphate biosynthesis. Catalyzes the ATP-dependent transfer of a sulfur to tRNA to produce 4-thiouridine in position 8 of tRNAs, which functions as a near-UV photosensor. Also catalyzes the transfer of sulfur to the sulfur carrier protein ThiS, forming ThiS-thiocarboxylate. This is a step in the synthesis of thiazole, in the thiamine biosynthesis pathway. The sulfur is donated as persulfide by IscS. The polypeptide is Probable tRNA sulfurtransferase (Acholeplasma laidlawii (strain PG-8A)).